The primary structure comprises 178 residues: ATP-dependent protease subunit HslV (178 aa).

T7 is a catalytic residue. The Na(+) site is built by G162, C165, and T168.

The protein belongs to the peptidase T1B family. HslV subfamily. In terms of assembly, a double ring-shaped homohexamer of HslV is capped on each side by a ring-shaped HslU homohexamer. The assembly of the HslU/HslV complex is dependent on binding of ATP.

The protein localises to the cytoplasm. The catalysed reaction is ATP-dependent cleavage of peptide bonds with broad specificity.. With respect to regulation, allosterically activated by HslU binding. In terms of biological role, protease subunit of a proteasome-like degradation complex believed to be a general protein degrading machinery. This chain is ATP-dependent protease subunit HslV, found in Cupriavidus taiwanensis (strain DSM 17343 / BCRC 17206 / CCUG 44338 / CIP 107171 / LMG 19424 / R1) (Ralstonia taiwanensis (strain LMG 19424)).